Here is a 1803-residue protein sequence, read N- to C-terminus: 6-methylsalicylic acid synthase (1803 aa).

The interval 1–40 (MEVHGDEVLSVDSGVSTPPSTGSGFRRPLETPGTEIGNLN) is disordered. A compositionally biased stretch (low complexity) spans 13–24 (SGVSTPPSTGSG). The region spanning 44–470 (QNEVAVVGMA…GTVSHAIIEE (427 aa)) is the Ketosynthase family 3 (KS3) domain. Residues Cys-216, His-351, and His-391 each act as for beta-ketoacyl synthase activity in the active site. Residues 581-894 (VWVFSGHGAQ…SIAQLHCRGA (314 aa)) enclose the Malonyl-CoA:ACP transacylase (MAT) domain. Ser-667 serves as the catalytic For malonyltransferase activity. Residues 940–1058 (HTLLGQRVPV…GQWEAGGSKN (119 aa)) form an N-terminal hotdog fold region. In terms of domain architecture, PKS/mFAS DH spans 940-1218 (HTLLGQRVPV…FSEIEGTPGS (279 aa)). His-972 functions as the Proton acceptor; for thioesterase activity in the catalytic mechanism. The interval 1073-1218 (ANNKLADNFS…FSEIEGTPGS (146 aa)) is C-terminal hotdog fold. Residue Asp-1129 is the Proton donor; for thioesterase activity of the active site. Residues 1141–1262 (TSVGSTLFFD…KNVADLYCGS (122 aa)) form a required for homotetramer formation region. One can recognise a Ketoreductase (KR) domain in the interval 1434 to 1628 (STYLITGGLG…AVAVQWTSWR (195 aa)). Over residues 1701-1710 (ASSADAPSAA) the composition is skewed to low complexity. The disordered stretch occupies residues 1701 to 1721 (ASSADAPSAAPKETNEMPESI). The Carrier domain maps to 1726–1801 (TWLDERIRDC…HLVGWFLEKM (76 aa)). Ser-1761 is modified (O-(pantetheine 4'-phosphoryl)serine). A required for catalytic activity region spans residues 1783-1803 (LTWSCPTVSHLVGWFLEKMGN).

In terms of assembly, homotetramer.

It carries out the reaction 3 malonyl-CoA + acetyl-CoA + NADPH + 3 H(+) = 6-methylsalicylate + 3 CO2 + NADP(+) + 4 CoA + H2O. It participates in secondary metabolite biosynthesis. Its function is as follows. 6-methylsalicylic acid synthase; part of the gene cluster that mediates the biosynthesis of terreic acid, a quinone epoxide inhibitor of Bruton's tyrosine kinase. The first step of the pathway is the synthesis of 6-methylsalicylic acid (6-MSA) by the 6-methylsalicylic acid synthase atX. In the biosynthesis of 6-MSA, atX utilizes one acetyl-CoA and three malonyl-CoAs as its substrates and catalyzes a series of programmed reactions including Claisen condensation, reduction, aldol cyclization, and the hydrolytic cleavage that yields 6-MSA. The 6-methylsalicylate 1-monooxygenase atA then catalyzes the decarboxylative hydroxylation of 6-MSA to 3-methylcatechol. The next step is the conversion of 3-methylcatechol to 3-methyl-1,2,4-benzenetriol by cytochrome P450 monooxygenase atE, which is enhanced by cytochrome P450 monooxygenase atG. Then, the epoxidase atD catalyzes the epoxidation and hydroxyl oxidation of 3-methyl-1,2,4-benzenetriol to terremutin. Lastly, GMC oxidoreductase atC oxidizes terremutin to terreic acid. The protein is 6-methylsalicylic acid synthase of Aspergillus terreus (strain NIH 2624 / FGSC A1156).